The primary structure comprises 689 residues: DNA ligase (689 aa).

NAD(+) is bound by residues Asp40 to Asp44, Ser89 to Leu90, and Glu122. The active-site N6-AMP-lysine intermediate is the Lys124. NAD(+)-binding residues include Arg145, Glu182, Lys300, and Lys325. Zn(2+)-binding residues include Cys419, Cys422, Cys437, and Cys442. Positions Gln600 to Ala689 constitute a BRCT domain.

Belongs to the NAD-dependent DNA ligase family. LigA subfamily. Requires Mg(2+) as cofactor. Mn(2+) is required as a cofactor.

The enzyme catalyses NAD(+) + (deoxyribonucleotide)n-3'-hydroxyl + 5'-phospho-(deoxyribonucleotide)m = (deoxyribonucleotide)n+m + AMP + beta-nicotinamide D-nucleotide.. Its function is as follows. DNA ligase that catalyzes the formation of phosphodiester linkages between 5'-phosphoryl and 3'-hydroxyl groups in double-stranded DNA using NAD as a coenzyme and as the energy source for the reaction. It is essential for DNA replication and repair of damaged DNA. This Gemmatimonas aurantiaca (strain DSM 14586 / JCM 11422 / NBRC 100505 / T-27) protein is DNA ligase.